We begin with the raw amino-acid sequence, 1390 residues long: DNA-directed RNA polymerase III subunit RPC1 (1390 aa).

Zn(2+) is bound by residues Cys69, Cys72, Cys79, His82, Cys109, and Cys112. Lys144 provides a ligand contact to DNA. Residues Cys156 and Cys159 each coordinate Zn(2+). DNA-binding residues include Lys167, Ser326, Lys348, Arg353, Arg360, and Arg366. The residue at position 445 (Lys445) is an N6-acetyllysine. An RNA-binding site is contributed by Arg464. 3 residues coordinate Mg(2+): Asp499, Asp501, and Asp503. Residue Asp503 participates in RNA binding. Residues 844-856 form a bridging helix region; sequence PTEFFFHTMAGRE. Residues Arg1159, Arg1305, and Lys1323 each coordinate DNA.

The protein belongs to the RNA polymerase beta' chain family. As to quaternary structure, component of the RNA polymerase III (Pol III) complex consisting of 17 subunits: a ten-subunit catalytic core composed of POLR3A/RPC1, POLR3B/RPC2, POLR1C/RPAC1, POLR1D/RPAC2, POLR3K/RPC10, POLR2E/RPABC1, POLR2F/RPABC2, POLR2H/RPABC3, POLR2K/RPABC4 and POLR2L/RPABC5; a mobile stalk composed of two subunits POLR3H/RPC8 and CRCP/RPC9, protruding from the core and functioning primarily in transcription initiation; and additional subunits homologous to general transcription factors of the RNA polymerase II machinery, POLR3C/RPC3-POLR3F/RPC6-POLR3G/RPC7 heterotrimer required for transcription initiation and POLR3D/RPC4-POLR3E/RPC5 heterodimer involved in both transcription initiation and termination. As part of the RNA polymerase III complex, interacts with PKP2. It depends on Mg(2+) as a cofactor.

It localises to the nucleus. The protein resides in the cytoplasm. Its subcellular location is the cytosol. The catalysed reaction is RNA(n) + a ribonucleoside 5'-triphosphate = RNA(n+1) + diphosphate. Its function is as follows. Catalytic core component of RNA polymerase III (Pol III), a DNA-dependent RNA polymerase which synthesizes small non-coding RNAs using the four ribonucleoside triphosphates as substrates. Synthesizes 5S rRNA, snRNAs, tRNAs and miRNAs from at least 500 distinct genomic loci. Pol III-mediated transcription cycle proceeds through transcription initiation, transcription elongation and transcription termination stages. During transcription initiation, Pol III is recruited to DNA promoters type I, II or III with the help of general transcription factors and other specific initiation factors. Once the polymerase has escaped from the promoter it enters the elongation phase during which RNA is actively polymerized, based on complementarity with the template DNA strand. Transcription termination involves the release of the RNA transcript and polymerase from the DNA. Forms Pol III active center together with the second largest subunit POLR3B/RPC2. Appends one nucleotide at a time to the 3' end of the nascent RNA, with POLR3A/RPC1 contributing a Mg(2+)-coordinating DxDGD motif, and POLR3B/RPC2 participating in the coordination of a second Mg(2+) ion and providing lysine residues believed to facilitate Watson-Crick base pairing between the incoming nucleotide and template base. Typically, Mg(2+) ions direct a 5' nucleoside triphosphate to form a phosphodiester bond with the 3' hydroxyl of the preceding nucleotide of the nascent RNA, with the elimination of pyrophosphate. Pol III plays a key role in sensing and limiting infection by intracellular bacteria and DNA viruses. Acts as a nuclear and cytosolic DNA sensor involved in innate immune response. Can sense non-self dsDNA that serves as template for transcription into dsRNA. The non-self RNA polymerase III transcripts, such as Epstein-Barr virus-encoded RNAs (EBERs) induce type I interferon and NF-kappa-B through the RIG-I pathway. The polypeptide is DNA-directed RNA polymerase III subunit RPC1 (Bos taurus (Bovine)).